The following is a 325-amino-acid chain: Glutarate 2-hydroxylase (325 aa).

Fe cation-binding residues include H160, D162, and H292.

The protein belongs to the glutarate hydroxylase family. Homotetramer. Fe(2+) is required as a cofactor.

It carries out the reaction glutarate + 2-oxoglutarate + O2 = (S)-2-hydroxyglutarate + succinate + CO2. The protein operates within amino-acid degradation. In terms of biological role, acts as an alpha-ketoglutarate-dependent dioxygenase catalyzing hydroxylation of glutarate (GA) to L-2-hydroxyglutarate (L2HG). Functions in a L-lysine degradation pathway that proceeds via cadaverine, glutarate and L-2-hydroxyglutarate. In Klebsiella pneumoniae (strain 342), this protein is Glutarate 2-hydroxylase.